The chain runs to 331 residues: Ketol-acid reductoisomerase (NADP(+)) (331 aa).

One can recognise a KARI N-terminal Rossmann domain in the interval 1 to 181; the sequence is MKVYYEKDAN…GGSRSGVIET (181 aa). Residues 24–27, Arg-47, and 82–85 contribute to the NADP(+) site; these read YGSQ and DQVQ. His-107 is an active-site residue. Residue Gly-133 participates in NADP(+) binding. Positions 182–327 constitute a KARI C-terminal knotted domain; that stretch reads TFREETETDL…GELRGMMPWL (146 aa). Mg(2+)-binding residues include Asp-190, Glu-194, Glu-226, and Glu-230. Ser-251 contributes to the substrate binding site.

Belongs to the ketol-acid reductoisomerase family. The cofactor is Mg(2+).

The enzyme catalyses (2R)-2,3-dihydroxy-3-methylbutanoate + NADP(+) = (2S)-2-acetolactate + NADPH + H(+). It carries out the reaction (2R,3R)-2,3-dihydroxy-3-methylpentanoate + NADP(+) = (S)-2-ethyl-2-hydroxy-3-oxobutanoate + NADPH + H(+). It functions in the pathway amino-acid biosynthesis; L-isoleucine biosynthesis; L-isoleucine from 2-oxobutanoate: step 2/4. It participates in amino-acid biosynthesis; L-valine biosynthesis; L-valine from pyruvate: step 2/4. Functionally, involved in the biosynthesis of branched-chain amino acids (BCAA). Catalyzes an alkyl-migration followed by a ketol-acid reduction of (S)-2-acetolactate (S2AL) to yield (R)-2,3-dihydroxy-isovalerate. In the isomerase reaction, S2AL is rearranged via a Mg-dependent methyl migration to produce 3-hydroxy-3-methyl-2-ketobutyrate (HMKB). In the reductase reaction, this 2-ketoacid undergoes a metal-dependent reduction by NADPH to yield (R)-2,3-dihydroxy-isovalerate. The polypeptide is Ketol-acid reductoisomerase (NADP(+)) (Nitratidesulfovibrio vulgaris (strain ATCC 29579 / DSM 644 / CCUG 34227 / NCIMB 8303 / VKM B-1760 / Hildenborough) (Desulfovibrio vulgaris)).